Here is an 851-residue protein sequence, read N- to C-terminus: Transforming growth factor beta receptor type 3 (851 aa).

The N-terminal stretch at 1–20 (MTSHYVIAIFALMSSCLATA) is a signal peptide. Over 21 to 787 (GPEPGALCEL…IFHGLDTLTV (767 aa)) the chain is Extracellular. Cysteine 52 and cysteine 197 are disulfide-bonded. Asparagine 141 and asparagine 492 each carry an N-linked (GlcNAc...) asparagine glycan. Residues 455-730 (KCDNEKMIVA…PKCVPPDEAC (276 aa)) form the ZP domain. O-linked (Xyl...) (glycosaminoglycan) serine glycosylation is found at serine 534 and serine 545. 3 N-linked (GlcNAc...) asparagine glycosylation sites follow: asparagine 571, asparagine 590, and asparagine 697. Intrachain disulfides connect cysteine 639/cysteine 705, cysteine 660/cysteine 730, and cysteine 710/cysteine 723. The interval 737-751 (IIWAMMQNKKTFTKP) is interaction with TGF-beta ligand. The chain crosses the membrane as a helical span at residues 788–809 (MGIAFAAFVIGALLTGALWYIY). Residues 810–851 (SHTGETAGRQQVPTSPPASENSSAAHSIGSTQSTPCSSSSTA) lie on the Cytoplasmic side of the membrane. Residues 816-851 (AGRQQVPTSPPASENSSAAHSIGSTQSTPCSSSSTA) are disordered. A compositionally biased stretch (polar residues) spans 817-834 (GRQQVPTSPPASENSSAA). The span at 836–851 (SIGSTQSTPCSSSSTA) shows a compositional bias: low complexity. Phosphothreonine is present on threonine 840.

Forms homodimers and homooligomers. Interacts with DYNLT4. Interacts with integrin ITGA5:ITGB1; this interaction promotes the internalization and trafficking of ITGA5:ITGB1 into endocytic vesicles. Interacts with TGFB1, BMP2, BMP5, BMP7 or GDF5 and inhibin A via the ligand binding domains. Interacts with ALK3/BMPR1A; this interaction results in the cell surface retention of BMPR1A. Interacts with ALK6/BMPR1B; this interaction enhances BMPR1B-mediated stimulation of the BMP signaling pathway. Interacts with the scaffolding protein beta-arrestin2/ARRB2; this interaction mediates internalization of TGFBR3 and thus regulates migration, actin cytoskeleton and activation of CDC42. As to quaternary structure, (Microbial infection) Interacts with human cytomegalovirus trimer complex composed of gH, gL, and gO; these interactions may promote HCMV cell entry in specific cell types. Extensively modified by glycosaminoglycan groups (GAG). In terms of processing, phosphorylated in the cytoplasmic domain by the type II receptor TGFBR2 at THR-840 to mediate recruitment of ARRB2 and subsequent internalization of TGFBR2 and TGFBR3.

It localises to the cell membrane. It is found in the secreted. The protein resides in the extracellular space. The protein localises to the extracellular matrix. Cell surface receptor that regulates diverse cellular processes including cell proliferation, differentiation, migration, and apoptosis. Initiates BMP, inhibin, and TGF-beta signaling pathways by interacting with different ligands including TGFB1, BMP2, BMP5, BMP7 or GDF5. Alternatively, acts as a cell surface coreceptor for BMP ligands, serving to enhance ligand binding by differentially regulating BMPR1A/ALK3 and BMPR1B/ALK6 receptor trafficking. Promotes epithelial cell adhesion, focal adhesion formation and integrin signaling during epithelial cell spreading on fibronectin. By interacting with the scaffolding protein beta-arrestin2/ARRB2, regulates migration or actin cytoskeleton and promotes the activation of CDC42 as well as the inhibition of NF-kappa-B. In gonadotrope cells, acts as an inhibin A coreceptor and regulates follicle-stimulating hormone (FSH) levels and female fertility. Plays a role in the inhibition of directed and random cell migration in epithelial cells by altering the actin cytoskeletal organization. Participates in epithelial-mesenchymal transformation (EMT) upon binding to BMP2 or TGFB2, by activating the PAR6/SMURF1/RHOA pathway. Its function is as follows. (Microbial infection) May act as a receptor for human cytomegalovirus in different cell types by interacting with HCMV trimer composed of GO, GH and GL. The chain is Transforming growth factor beta receptor type 3 from Homo sapiens (Human).